A 773-amino-acid polypeptide reads, in one-letter code: Serine/threonine-protein kinase CBK1 (773 aa).

2 stretches are compositionally biased toward polar residues: residues 50-59 (LHDQYSSHME) and 178-217 (GNYN…SPQR). Disordered stretches follow at residues 50–111 (LHDQ…GGNI) and 177–275 (NGNY…QQQQ). Composition is skewed to low complexity over residues 218 to 256 (QPAQ…QQQP) and 265 to 275 (QQTQLQQQQQQ). In terms of domain architecture, Protein kinase spans 370-686 (FHTVQVIGKG…ADEIKSHPFF (317 aa)). ATP is bound by residues 376 to 384 (IGKGAFGEV) and K399. Residue D493 is the Proton acceptor of the active site. One can recognise an AGC-kinase C-terminal domain in the interval 687 to 771 (RGVDWNTIRQ…SRFDYLTRKN (85 aa)).

The protein belongs to the protein kinase superfamily. STE Ser/Thr protein kinase family. COT1 subfamily.

It carries out the reaction L-seryl-[protein] + ATP = O-phospho-L-seryl-[protein] + ADP + H(+). The enzyme catalyses L-threonyl-[protein] + ATP = O-phospho-L-threonyl-[protein] + ADP + H(+). Functionally, protein kinase that seems to play a role in the regulation of cell morphogenesis and proliferation. The protein is Serine/threonine-protein kinase CBK1 (CBK1) of Candida glabrata (strain ATCC 2001 / BCRC 20586 / JCM 3761 / NBRC 0622 / NRRL Y-65 / CBS 138) (Yeast).